The primary structure comprises 63 residues: Large ribosomal subunit protein uL30 (63 aa).

Belongs to the universal ribosomal protein uL30 family. As to quaternary structure, part of the 50S ribosomal subunit.

The protein is Large ribosomal subunit protein uL30 of Rickettsia prowazekii (strain Madrid E).